A 198-amino-acid chain; its full sequence is tRNA (pseudouridine(54)-N(1))-methyltransferase (198 aa).

The S-adenosyl-L-methionine site is built by Leu-134 and Gly-155.

It belongs to the methyltransferase superfamily. TrmY family. As to quaternary structure, homodimer.

It is found in the cytoplasm. The catalysed reaction is pseudouridine(54) in tRNA + S-adenosyl-L-methionine = N(1)-methylpseudouridine(54) in tRNA + S-adenosyl-L-homocysteine + H(+). Specifically catalyzes the N1-methylation of pseudouridine at position 54 (Psi54) in tRNAs. The polypeptide is tRNA (pseudouridine(54)-N(1))-methyltransferase (Thermococcus kodakarensis (strain ATCC BAA-918 / JCM 12380 / KOD1) (Pyrococcus kodakaraensis (strain KOD1))).